We begin with the raw amino-acid sequence, 3117 residues long: Centrosome-associated protein 350 (3117 aa).

A disordered region spans residues 1 to 24 (MRSSKSKEVPLPNPRNSQSKDTVQ). The segment covering 14-24 (PRNSQSKDTVQ) has biased composition (polar residues). A phosphoserine mark is found at Ser86, Ser139, Ser142, and Ser218. Disordered regions lie at residues 249–275 (PKALRLTDSSPSSTSTSNSQRLDILKR), 436–514 (ILGP…NKQE), 548–625 (TVEL…TEQK), and 671–722 (LEEP…PPQP). Residues 255 to 267 (TDSSPSSTSTSNS) are compositionally biased toward low complexity. The segment covering 469-501 (GRAESDPRLDVLHRHLQRNSERSRSKSRSENNI) has biased composition (basic and acidic residues). Residues Ser473 and Ser507 each carry the phosphoserine modification. Positions 563 to 573 (PRSHSPVKRKP) are enriched in basic residues. Basic and acidic residues-rich tracts occupy residues 591-625 (YDTDEVRQYIVRQQEERKRKQNEEKKAQKEATEQK) and 694-703 (ESDKENKVQE). Residues 598–645 (QYIVRQQEERKRKQNEEKKAQKEATEQKNKRLQELYRKQKEAFTKVKN) adopt a coiled-coil conformation. Ser695 carries the phosphoserine modification. The span at 705-718 (PPSASSSSDMSLSE) shows a compositional bias: low complexity. Residue Thr878 is modified to Phosphothreonine. Position 939 is a phosphoserine (Ser939). The segment covering 981-992 (SVSEGPLLSEGS) has biased composition (low complexity). Residues 981-1002 (SVSEGPLLSEGSLSEEEGDQDG) form a disordered region. Residue Ser1061 is modified to Phosphoserine. The segment at 1081-1298 (EDKLDRGTST…GFKPNAPLTD (218 aa)) is disordered. The span at 1087 to 1102 (GTSTSRPLNATATPLS) shows a compositional bias: polar residues. Over residues 1135-1144 (QEDHSNRKSA) the composition is skewed to basic and acidic residues. Low complexity-rich tracts occupy residues 1153 to 1172 (TSQHSSGAQSAASSRSSTSS) and 1251 to 1267 (QKTPTSPLSPSSQKSLQ). Phosphothreonine is present on Thr1253. Phosphoserine occurs at positions 1256 and 1259. The span at 1272–1283 (GTSSERSKSSVM) shows a compositional bias: polar residues. Positions 1369–1411 (IKAQQQRHERDLALLKLKAEQEALESQRQLEETRNKAAQVHAE) form a coiled coil. 2 disordered regions span residues 1494–1674 (TRTE…GGQD) and 1794–1854 (KLKS…SRMD). Polar residues predominate over residues 1503–1512 (PSVSLSQSKE). Composition is skewed to low complexity over residues 1522–1535 (YSASYDSYSESSGY) and 1543–1556 (SSGSSRQESPSVPS). Over residues 1558–1571 (KENEKKLNGEKIES) the composition is skewed to basic and acidic residues. Ser1613 is subject to Phosphoserine. Basic and acidic residues predominate over residues 1631-1647 (ESHRRFNMEKRRGHHDD). 2 positions are modified to phosphoserine: Ser1648 and Ser1653. Residues 1707 to 1800 (KALKEKTKAE…LQEKLKSAGE (94 aa)) are a coiled coil. A compositionally biased stretch (basic and acidic residues) spans 1794 to 1815 (KLKSAGESKLDSHSDDDTKDNK). Ser1818 carries the phosphoserine modification. Positions 1827 to 1841 (RSPSPISISSSETSS) are enriched in low complexity. Residues 1856 to 1899 (KFLTKREQKLMQRRQHAEELLEWKRRLDAEEAEIRQMEKQALAA) adopt a coiled-coil conformation. Basic and acidic residues predominate over residues 1903–1925 (ELIKPKTPKKELEDQRTEQKEIA). Disordered regions lie at residues 1903–2020 (ELIK…QCHL), 2107–2221 (ELSQ…ESGD), 2329–2356 (LKERQSDQDMNHSPNIQSGKDIHEQKNT), and 2407–2432 (KDSQSCRDKPQPMRSSTSGATSFGSN). Ser1936 carries the phosphoserine modification. Polar residues predominate over residues 1983-2005 (ELESSTSPSKHSLPKSCTSVSKQ). A coiled-coil region spans residues 2051–2110 (EGRIRALKDELRKRKSVVNQLKKEQKKRQKERLKAQEASLIKQLESYDEFIKKTEAELSQ). Residues 2111-2129 (DLETSPTAKPQIKTLSSAS) show a composition bias toward polar residues. Ser2115 is subject to Phosphoserine. Over residues 2141-2170 (HRSETAKNWKSLTESERSRGSLESIAEHVD) the composition is skewed to basic and acidic residues. The span at 2173 to 2184 (LSGSERSVSERS) shows a compositional bias: polar residues. The segment covering 2191–2201 (RVNEWDSRTED) has biased composition (basic and acidic residues). Residue Thr2204 is modified to Phosphothreonine. Ser2206 carries the post-translational modification Phosphoserine. 2 stretches are compositionally biased toward basic and acidic residues: residues 2329–2338 (LKERQSDQDM) and 2407–2417 (KDSQSCRDKPQ). Positions 2419–2432 (MRSSTSGATSFGSN) are enriched in polar residues. Phosphoserine is present on residues Ser2431 and Ser2460. Basic and acidic residues predominate over residues 2465–2478 (MKSKERSDVEHEQQ). The tract at residues 2465–2485 (MKSKERSDVEHEQQVTESPSL) is disordered. One can recognise a CAP-Gly domain in the interval 2517 to 2559 (GETSFAKGFWAGVELDKPEGNNNGTYDGIAYFECKEKHGIFAP). Phosphothreonine is present on Thr2689. Positions 2719-2752 (LLDLLTREKNQLEAQLKSSLNEEKKSKQQLEKIS) form a coiled coil. Residues Ser2830 and Ser2839 each carry the phosphoserine modification.

In terms of assembly, part of a ternary complex that contains CEP350, CEP43 and MAPRE1. Interacts (via C-terminus) directly with CEP43 (via N-terminus). Interacts with NR1H3, PPARA, PPARD and PPARG. Interacts directly with microtubules. Interacts with the fusion protein CEP43-FGFR1, and by doing so recruits and activates PI3K and PLC-gamma. Interacts with CYLD. Interacts with CFAP157. Interacts with CEP19 (via C-terminus). Interacts with CEP78; promoting CEP78 localization to centrosome and centriole. Phosphorylated during mitosis. Detected in heart, brain, skeletal muscle, testis, placenta, lung, liver, kidney and pancreas.

The protein resides in the cytoplasm. It is found in the cytoskeleton. Its subcellular location is the microtubule organizing center. It localises to the centrosome. The protein localises to the spindle. The protein resides in the nucleus. It is found in the centriole. Its subcellular location is the cilium basal body. In terms of biological role, plays an essential role in centriole growth by stabilizing a procentriolar seed composed of at least, SASS6 and CPAP. Required for anchoring microtubules to the centrosomes and for the integrity of the microtubule network. Recruits PPARA to discrete subcellular compartments and thereby modulates PPARA activity. Required for ciliation. In Homo sapiens (Human), this protein is Centrosome-associated protein 350.